We begin with the raw amino-acid sequence, 325 residues long: Tagatose 1,6-diphosphate aldolase 1 (325 aa).

This sequence belongs to the aldolase LacD family.

It catalyses the reaction D-tagatofuranose 1,6-bisphosphate = D-glyceraldehyde 3-phosphate + dihydroxyacetone phosphate. It functions in the pathway carbohydrate metabolism; D-tagatose 6-phosphate degradation; D-glyceraldehyde 3-phosphate and glycerone phosphate from D-tagatose 6-phosphate: step 2/2. The polypeptide is Tagatose 1,6-diphosphate aldolase 1 (Streptococcus agalactiae serotype III (strain NEM316)).